The following is a 502-amino-acid chain: uncharacterized protein (502 aa).

A helical membrane pass occupies residues 1–21; the sequence is MKIFLVILSVFFFNGCFGLAY. PLD phosphodiesterase domains follow at residues 162-189 and 396-423; these read IKKRMHNKLFIVDNFAVIIGGRNIGDNY and TKHSLHGKTIVFDDALTLLGSFNIDPRS.

Belongs to the phospholipase D family. Cardiolipin synthase subfamily.

The protein localises to the cell membrane. This is an uncharacterized protein from Helicobacter pylori (strain J99 / ATCC 700824) (Campylobacter pylori J99).